A 179-amino-acid polypeptide reads, in one-letter code: MNDPEQYEPSSSTESVLMPPPALPQYFQRPAAAPQVYSTLEPSVQNLRSSLHKPLTGNQQQFVQKTLENVQKNPSQDDTHEFINQLADYPPTIPDSVTLHFLKSAGVDGSDPRVTRMISLAAQKHVSDIILDAMTSARMKGLGQTKKGTKDTKYTLTEELLDEILKEYGHQNTRPPYHT.

Residues 1–23 are disordered; sequence MNDPEQYEPSSSTESVLMPPPAL.

It belongs to the TAF10 family. In terms of assembly, component of the TFIID basal transcription factor complex, composed of TATA-box-binding protein tbp-1, and a number of TBP-associated factors (TAFs).

Its subcellular location is the nucleus. The TFIID basal transcription factor complex plays a major role in the initiation of RNA polymerase II (Pol II)-dependent transcription. TFIID recognizes and binds promoters via its subunit tbp-1, a TATA-box-binding protein, and promotes assembly of the pre-initiation complex (PIC). The TFIID complex consists of tbp-1 and TBP-associated factors (TAFs), including taf-10. Essential for early embryonic development, but not required for transcription of some genes; probably acts via activating transcription initiation by RNA Pol II, as part of the TFIID complex. The protein is Transcription initiation factor TFIID subunit 10 of Caenorhabditis elegans.